A 216-amino-acid polypeptide reads, in one-letter code: Small ribosomal subunit protein uS5 (216 aa).

The S5 DRBM domain occupies 51 to 114 (LEEEVIDVNL…DDAKFNIIKV (64 aa)).

Belongs to the universal ribosomal protein uS5 family. As to quaternary structure, part of the 30S ribosomal subunit. Contacts protein S4.

Its function is as follows. With S4 and S12 plays an important role in translational accuracy. This is Small ribosomal subunit protein uS5 from Methanothermobacter thermautotrophicus (strain ATCC 29096 / DSM 1053 / JCM 10044 / NBRC 100330 / Delta H) (Methanobacterium thermoautotrophicum).